The chain runs to 417 residues: Gamma-glutamyl phosphate reductase (417 aa).

This sequence belongs to the gamma-glutamyl phosphate reductase family.

The protein resides in the cytoplasm. It carries out the reaction L-glutamate 5-semialdehyde + phosphate + NADP(+) = L-glutamyl 5-phosphate + NADPH + H(+). Its pathway is amino-acid biosynthesis; L-proline biosynthesis; L-glutamate 5-semialdehyde from L-glutamate: step 2/2. Catalyzes the NADPH-dependent reduction of L-glutamate 5-phosphate into L-glutamate 5-semialdehyde and phosphate. The product spontaneously undergoes cyclization to form 1-pyrroline-5-carboxylate. This chain is Gamma-glutamyl phosphate reductase, found in Escherichia coli O7:K1 (strain IAI39 / ExPEC).